The following is a 217-amino-acid chain: Ribonuclease T (217 aa).

Residues 20–194 (VVIDIETAGF…YDTQQTANLF (175 aa)) enclose the Exonuclease domain. Mg(2+)-binding residues include D23, E25, H181, and D186. H181 functions as the Proton donor/acceptor in the catalytic mechanism.

Belongs to the RNase T family. Homodimer. Mg(2+) is required as a cofactor.

In terms of biological role, trims short 3' overhangs of a variety of RNA species, leaving a one or two nucleotide 3' overhang. Responsible for the end-turnover of tRNA: specifically removes the terminal AMP residue from uncharged tRNA (tRNA-C-C-A). Also appears to be involved in tRNA biosynthesis. This chain is Ribonuclease T, found in Buchnera aphidicola subsp. Baizongia pistaciae (strain Bp).